Here is a 297-residue protein sequence, read N- to C-terminus: Protein COFACTOR ASSEMBLY OF COMPLEX C SUBUNIT B CCB4, chloroplastic (297 aa).

The transit peptide at 1 to 33 directs the protein to the chloroplast; it reads MEARIILLRIQIPWSANRQFSHPPLDFPRFIRA. Topologically, residues 34–70 are stromal; sequence SSSSTSQKPKTYEGPKPRKNLVADFISKNDDLVRSLP. The chain crosses the membrane as a helical span at residues 71-91; that stretch reads IYVGGASLLAVLFNRTVSGIA. Residues 92-103 lie on the Lumenal side of the membrane; sequence PVADASSSQSRA. A helical membrane pass occupies residues 104-124; it reads DLLALGLAVTNLLTGLVWLSI. Residues 125–297 lie on the Stromal side of the membrane; sequence RPKSITPVNP…DSDEISRVTV (173 aa).

The protein localises to the plastid. It is found in the chloroplast thylakoid membrane. Functionally, required for the biogenesis and accumulation of native cytochrome b6 in the thylakoid membrane. Controls the conversion of apocytochrome b6 to holocytochrome b6. Required for covalent binding of the c-type heme to cytochrome b6. This Arabidopsis thaliana (Mouse-ear cress) protein is Protein COFACTOR ASSEMBLY OF COMPLEX C SUBUNIT B CCB4, chloroplastic.